A 499-amino-acid polypeptide reads, in one-letter code: Citrinin biosynthesis cluster MFS transporter mrr1 (499 aa).

The segment at 1-29 is disordered; that stretch reads MKEEIDAPVSTDASGTDLENARDQPSGEK. 8 consecutive transmembrane segments (helical) span residues 58 to 78, 95 to 115, 124 to 144, 155 to 175, 187 to 207, 215 to 235, 291 to 311, and 327 to 347; these read SLITCIFSTLTIWVTFSSSVF, VMTLGTSLTVLGFTVGPLVWG, LKPLYIGYAIFIIFQVPVAVA, FFLGFFGTSALAIIPGALADF, LFSAATFVGPIFGPIIGGFIV, WTAWITMIPASFFGIIAFLTL, ILVCMTIYISLIYGILYLFFV, and GIAALPFLGILVGVLMGCLLV. Asparagine 361 carries N-linked (GlcNAc...) asparagine glycosylation. Transmembrane regions (helical) follow at residues 370-390, 395-415, 443-463, and 467-487; these read LPPMIVAAILLPIGLFWFGWT, ISWAPQAIAGAPIGMGILMIW, AVGAAFPLFATAMYHKLGVDW, and LLGFLSIAMIPIPVIFYFYGA.

Belongs to the major facilitator superfamily. CAR1 family.

The protein resides in the membrane. Functionally, MFS transporter; part of the gene cluster that mediates the biosynthesis the mycotoxin citrinin, a hepato-nephrotoxic compound to humans due to inhibition of respiration complex III. In Monascus ruber (Mold), this protein is Citrinin biosynthesis cluster MFS transporter mrr1.